A 142-amino-acid chain; its full sequence is Large-conductance mechanosensitive channel (142 aa).

3 helical membrane-spanning segments follow: residues Val14–Val34, Leu38–Leu58, and Gly82–Ile102.

This sequence belongs to the MscL family. As to quaternary structure, homopentamer.

It localises to the cell inner membrane. Functionally, channel that opens in response to stretch forces in the membrane lipid bilayer. May participate in the regulation of osmotic pressure changes within the cell. This chain is Large-conductance mechanosensitive channel, found in Rhizobium meliloti (strain 1021) (Ensifer meliloti).